A 151-amino-acid chain; its full sequence is Alpha-latroinsectotoxin-Lh1a (151 aa).

8 ANK repeats span residues 21–37 (TDVT…DLNA), 41–52 (ILIRNTNAVINI), 56–80 (VGLT…YLND), 84–104 (NGMT…VDFL), 105–116 (KWTPLHLAILFK), 117–125 (QLVIELLAK), 126–146 (TFFD…AVEK), and 147–151 (YIAAR).

This sequence belongs to the cationic peptide 01 (latrotoxin) family. 02 (alpha-latroinsectotoxin) subfamily. Homotetramer in membranes. Expressed by the venom gland.

Its subcellular location is the secreted. It is found in the target cell membrane. Functionally, insecticidal presynaptic neurotoxin that induces massive neurotransmitter release at insect (but not vertebrate) neuromuscular junctions. Native toxin forms cation-permeable pores (with high permeability to calcium) in lipid membranes locust muscle membrane and artificial lipid bilayers. May bind to insect neurexin-1 homolog, insect adhesion G protein-coupled receptor L1 homolog, and insect receptor-type tyrosine-protein phosphatase S homolog, and induces neurotransmitter exocytosis both by forming tetrameric pores in membranes and signaling via G protein-coupled receptor. Oligomerization is a process independent of divalent cations. The toxin forms channels with 0.55-0.58 nm entrance diameter and a relatively small conductance in planar phospholipid membranes. The protein is Alpha-latroinsectotoxin-Lh1a of Latrodectus hasselti (Redback spider).